The primary structure comprises 162 residues: Small ribosomal subunit protein uS5 (162 aa).

An S5 DRBM domain is found at 7-70 (EEKMILIRRT…YARRNMVEVP (64 aa)).

The protein belongs to the universal ribosomal protein uS5 family. Part of the 30S ribosomal subunit. Contacts proteins S4 and S8.

Its function is as follows. With S4 and S12 plays an important role in translational accuracy. Located at the back of the 30S subunit body where it stabilizes the conformation of the head with respect to the body. The protein is Small ribosomal subunit protein uS5 (rpsE) of Thermus thermophilus (strain ATCC BAA-163 / DSM 7039 / HB27).